Reading from the N-terminus, the 295-residue chain is MASDLRPPEHQVAGHRASADKLGPLVDGEGLFYKPLQAGERGEHEAAFYAAFTAHPAVPPRVRGAFFPRFHGTRFLPAPASPGGAPYPHIVLDDLLAGLPSPCVADVKIGACTWPPRSPDPYVAKCLAKDRETTSALLGFRVSGVRVVDARGGAVWRPDRSELKGIDAAGVRRVLRRYVSTGGGDGLDCALAAAVYGGEGGVLAQLRELKAWFEEQTLYHFYSASILFGYDANAAAAAAPGGGSGGVRVKLVDFAHVDDGDGVIDHNFLGGLCSLIKFIGDIVAEVTEKASSDHS.

The interval 1–21 is disordered; it reads MASDLRPPEHQVAGHRASADK.

This sequence belongs to the inositol phosphokinase (IPK) family.

The enzyme catalyses 1D-myo-inositol 1,4,5-trisphosphate + 2 ATP = 1D-myo-inositol 1,3,4,5,6-pentakisphosphate + 2 ADP + 2 H(+). It carries out the reaction 1D-myo-inositol 1,3,4,6-tetrakisphosphate + ATP = 1D-myo-inositol 1,3,4,5,6-pentakisphosphate + ADP + H(+). In terms of biological role, inositol phosphate kinase with a broad substrate specificity. Phosphorylates inositol 1,4,5-trisphosphate (Ins(1,4,5)P3), inositol 1,4,5,6-tetrakisphosphate (Ins(1,4,5,6)P4), inositol 1,3,4,5-tetrakisphosphate (Ins(1,3,4,5)P4), inositol 1,3,4,6-tetrakisphosphate (Ins(1,3,4,6)P4) and inositol 1,2,3,4,6-pentakisphosphate (Ins(1,2,3,4,6)P5) but not inositol 1,4-bisphosphate (Ins(1,4)P2), inositol 1,3,4-trisphosphate (Ins(1,3,4)P3), inositol 1,2,6-trisphosphate (Ins(1,2,6)P3), inositol 3,4,5,6-tetrakisphosphate (Ins(3,4,5,6)P4), inositol 1,3,4,5,6-pentakisphosphate (Ins(1,3,4,5,6)P5), inositol 1,2,4,5,6-pentakisphosphate (Ins(1,2,4,5,6)P5) or inositol hexakisphosphate (InsP6). Regulates pollen and root development probably through the regulation of InsP3-mediated calcium accumulation. This chain is Inositol polyphosphate multikinase IPK2, found in Oryza sativa subsp. indica (Rice).